We begin with the raw amino-acid sequence, 61 residues long: Temporin-CG3 (61 aa).

Residues 1–22 form the signal peptide; that stretch reads MFTMKKPLLLLFFLATINLSLC. A propeptide spans 23–44 (removed in mature form); it reads EQERNAEEERRDEPDERNAEVE.

It belongs to the frog skin active peptide (FSAP) family. Temporin subfamily. As to expression, expressed by the skin glands.

It is found in the secreted. Antimicrobial peptide active against a variety of Gram-positive bacterial strains but not against Gram-negative bacteria. Has weak antifungal activity against a slime mold isolate. Has weak hemolytic activity against human erythrocytes. This chain is Temporin-CG3, found in Amolops chunganensis (Chungan torrent frog).